Consider the following 269-residue polypeptide: Tetrahydromethanopterin S-methyltransferase subunit C (269 aa).

Transmembrane regions (helical) follow at residues 18–38 (VLVI…FVPS), 39–59 (LAML…ANTT), 62–82 (VAAY…LGMG), 84–104 (ISAL…ALPF), 106–126 (LVLA…FIVG), 152–172 (ALAI…DLII), 180–200 (IIAL…NACI), and 222–242 (LVFS…VFWI).

The protein belongs to the MtrC family. The complex is composed of 8 subunits; MtrA, MtrB, MtrC, MtrD, MtrE, MtrF, MtrG and MtrH.

The protein resides in the cell membrane. It catalyses the reaction 5-methyl-5,6,7,8-tetrahydromethanopterin + coenzyme M + 2 Na(+)(in) = 5,6,7,8-tetrahydromethanopterin + methyl-coenzyme M + 2 Na(+)(out). It functions in the pathway one-carbon metabolism; methanogenesis from CO(2); methyl-coenzyme M from 5,10-methylene-5,6,7,8-tetrahydromethanopterin: step 2/2. Its function is as follows. Part of a complex that catalyzes the formation of methyl-coenzyme M and tetrahydromethanopterin from coenzyme M and methyl-tetrahydromethanopterin. This is an energy-conserving, sodium-ion translocating step. This Methanococcus vannielii (strain ATCC 35089 / DSM 1224 / JCM 13029 / OCM 148 / SB) protein is Tetrahydromethanopterin S-methyltransferase subunit C.